The following is a 33-amino-acid chain: ATP synthase 27 kDa subunit, mitochondrial (33 aa).

It is found in the mitochondrion. Its subcellular location is the mitochondrion inner membrane. Mitochondrial membrane ATP synthase (F(1)F(0) ATP synthase or Complex V) produces ATP from ADP in the presence of a proton gradient across the membrane which is generated by electron transport complexes of the respiratory chain. F-type ATPases consist of two structural domains, F(1) - containing the extramembraneous catalytic core and F(0) - containing the membrane proton channel, linked together by a central stalk and a peripheral stalk. During catalysis, ATP synthesis in the catalytic domain of F(1) is coupled via a rotary mechanism of the central stalk subunits to proton translocation. Part of the complex F(0) domain. This chain is ATP synthase 27 kDa subunit, mitochondrial, found in Solanum tuberosum (Potato).